Here is a 248-residue protein sequence, read N- to C-terminus: Ureidoacrylate amidohydrolase RutB (248 aa).

D41 serves as the catalytic Proton acceptor. Residue K150 is part of the active site. The active-site Nucleophile is C183.

Belongs to the isochorismatase family. RutB subfamily.

It catalyses the reaction (Z)-3-ureidoacrylate + H2O + H(+) = (Z)-3-aminoacrylate + NH4(+) + CO2. The catalysed reaction is (Z)-3-ureidoacrylate + H2O = (Z)-3-aminoacrylate + carbamate + H(+). It carries out the reaction (Z)-2-methylureidoacrylate + H2O + H(+) = (Z)-2-methylaminoacrylate + NH4(+) + CO2. Hydrolyzes ureidoacrylate to form aminoacrylate and carbamate. The carbamate hydrolyzes spontaneously, thereby releasing one of the nitrogen atoms of the pyrimidine ring as ammonia and one of its carbon atoms as CO2. This Stutzerimonas stutzeri (strain A1501) (Pseudomonas stutzeri) protein is Ureidoacrylate amidohydrolase RutB.